A 1159-amino-acid polypeptide reads, in one-letter code: Syntaxin-binding protein 5-like (1159 aa).

The interval 1-37 (MKKFRKVLDGLTTSSPVNPGGSPGCGSAAGTPSAAPT) is disordered. Over residues 25 to 37 (CGSAAGTPSAAPT) the composition is skewed to low complexity. WD repeat units lie at residues 67–108 (TALA…CHSQ), 115–154 (VLQM…SLKF), 159–195 (ITFC…GYVI), 214–248 (HLSD…DFRI), 254–286 (IHSV…TAKP), 307–350 (PILK…KAIT), 358–392 (IVDF…VVDL), 414–491 (TCTA…YKLK), 519–628 (QMIS…ELVV), and 642–703 (TCLD…STSG). Disordered regions lie at residues 571-604 (SDTE…SVRD) and 690-770 (LTRS…KAQS). Polar residues-rich tracts occupy residues 699-713 (QSTS…NQVS) and 721-739 (SPTS…SQPC). 4 WD repeats span residues 808 to 865 (VTTL…TGTV), 874 to 946 (RFGF…QACL), 951 to 995 (ITES…LDVS), and 1009 to 1032 (CFTN…TYSQ). The 61-residue stretch at 1094–1154 (GIEGMKAAAG…HELMLKCKDK (61 aa)) folds into the v-SNARE coiled-coil homology domain.

This sequence belongs to the WD repeat L(2)GL family.

Its subcellular location is the cytoplasm. It is found in the cell membrane. The protein resides in the membrane. Its function is as follows. May play a role in vesicle trafficking and exocytosis. The polypeptide is Syntaxin-binding protein 5-like (stxbp5l) (Danio rerio (Zebrafish)).